We begin with the raw amino-acid sequence, 203 residues long: dITP/XTP pyrophosphatase (203 aa).

16–21 serves as a coordination point for substrate; the sequence is SHNRGK. Mg(2+) contacts are provided by E48 and D77. Catalysis depends on D77, which acts as the Proton acceptor. Residues S78, 161–164, K184, and 189–190 contribute to the substrate site; these read FGYD and HR.

Belongs to the HAM1 NTPase family. As to quaternary structure, homodimer. The cofactor is Mg(2+).

It catalyses the reaction XTP + H2O = XMP + diphosphate + H(+). The catalysed reaction is dITP + H2O = dIMP + diphosphate + H(+). It carries out the reaction ITP + H2O = IMP + diphosphate + H(+). In terms of biological role, pyrophosphatase that catalyzes the hydrolysis of nucleoside triphosphates to their monophosphate derivatives, with a high preference for the non-canonical purine nucleotides XTP (xanthosine triphosphate), dITP (deoxyinosine triphosphate) and ITP. Seems to function as a house-cleaning enzyme that removes non-canonical purine nucleotides from the nucleotide pool, thus preventing their incorporation into DNA/RNA and avoiding chromosomal lesions. The sequence is that of dITP/XTP pyrophosphatase from Rhodospirillum centenum (strain ATCC 51521 / SW).